A 97-amino-acid chain; its full sequence is Aspartyl/glutamyl-tRNA(Asn/Gln) amidotransferase subunit C (97 aa).

Belongs to the GatC family. As to quaternary structure, heterotrimer of A, B and C subunits.

It catalyses the reaction L-glutamyl-tRNA(Gln) + L-glutamine + ATP + H2O = L-glutaminyl-tRNA(Gln) + L-glutamate + ADP + phosphate + H(+). It carries out the reaction L-aspartyl-tRNA(Asn) + L-glutamine + ATP + H2O = L-asparaginyl-tRNA(Asn) + L-glutamate + ADP + phosphate + 2 H(+). Functionally, allows the formation of correctly charged Asn-tRNA(Asn) or Gln-tRNA(Gln) through the transamidation of misacylated Asp-tRNA(Asn) or Glu-tRNA(Gln) in organisms which lack either or both of asparaginyl-tRNA or glutaminyl-tRNA synthetases. The reaction takes place in the presence of glutamine and ATP through an activated phospho-Asp-tRNA(Asn) or phospho-Glu-tRNA(Gln). This Prochlorococcus marinus (strain MIT 9301) protein is Aspartyl/glutamyl-tRNA(Asn/Gln) amidotransferase subunit C.